Here is a 2844-residue protein sequence, read N- to C-terminus: Sodium channel protein 60E (2844 aa).

Residues 1–121 (MSDDQATFND…WSPARRVCVY (121 aa)) lie on the Cytoplasmic side of the membrane. The I repeat unit spans residues 107-434 (FLFYPWSPAR…FDPSVLNVKK (328 aa)). The helical transmembrane segment at 122–145 (IATNQFFDYCVMATILFNCIFLAM) threads the bilayer. Residues 146–151 (TETVEE) are Extracellular-facing. Residues 152–172 (AEYIFLAIYSIEMVIKIIAKG) traverse the membrane as a helical segment. Over 173–183 (FLLNKYTYLRN) the chain is Cytoplasmic. Residues 184 to 202 (PWNWLDFVVITSGYATIGM) form a helical membrane-spanning segment. Residues 203-208 (EVGNLA) lie on the Extracellular side of the membrane. The chain crosses the membrane as a helical; Voltage-sensor span at residues 209 to 228 (GLRTFRVLRALKTVSIMPGL). Over 229–244 (KTIINALLHSFRQLAE) the chain is Cytoplasmic. A helical membrane pass occupies residues 245–265 (VMTLTIFCLMVFALFALQVYM). The Extracellular portion of the chain corresponds to 266–340 (GELRNKCVRQ…PNHGYTNFDN (75 aa)). An intrachain disulfide couples Cys272 to Cys318. 3 N-linked (GlcNAc...) asparagine glycosylation sites follow: Asn282, Asn293, and Asn311. Residues 341–365 (FMWSMLTTFQLITLDYWENVYNMVL) constitute an intramembrane region (pore-forming). Over 366 to 374 (ATCGPMSVS) the chain is Extracellular. Residues 375–395 (FFTVVVFFGSFYLINLMLAVV) traverse the membrane as a helical segment. The Cytoplasmic portion of the chain corresponds to 396 to 687 (ALSYEEEAEI…QNCLYKVVRD (292 aa)). Residues 452 to 610 (ASYSKKKTRR…QDTTNDMGHV (159 aa)) are disordered. Over residues 455–465 (SKKKTRRKKTK) the composition is skewed to basic residues. The segment covering 469-479 (EGGTNGNGNGS) has biased composition (gly residues). Composition is skewed to low complexity over residues 511-520 (QAQKQYQQME) and 577-586 (SSNSSGVNRE). The segment covering 593–603 (GVVDDHEEQDT) has biased composition (acidic residues). Residues 668–1130 (CTDYESWLQF…ESIELLGQYN (463 aa)) form an II repeat. Residues 688-708 (PLFELAITLCIVLNTAFLAME) form a helical membrane-spanning segment. Over 709–718 (HHGMSESFRN) the chain is Extracellular. The helical transmembrane segment at 719–743 (ALDVGNKVFTSIFTFECIVKLMALS) threads the bilayer. Residues 744–749 (KDFFLC) lie on the Cytoplasmic side of the membrane. Residues 750–769 (GWNIFDLLIVTASLLDIIFE) form a helical membrane-spanning segment. Over 770–775 (LVDGLS) the chain is Extracellular. The chain crosses the membrane as a helical; Voltage-sensor span at residues 776–795 (VLRGLRLLRVLKLAQSWTTM). The Cytoplasmic segment spans residues 796–810 (KVLLSIIISTIGALG). A helical membrane pass occupies residues 811-832 (NLTLILVIVIYIFAVIGMQLFS). Over 833 to 852 (KDYTPEKFDPDPVPRWNFND) the chain is Extracellular. Residues 853-873 (FFHSFMMIFRILCGEWIEPLW) constitute an intramembrane region (pore-forming). The Extracellular segment spans residues 874-889 (DCMRAEEEQGASTCFA). Cys875 and Cys887 are joined by a disulfide. Residues 890–910 (IFLPTLVMGNFMVLNLFLALL) form a helical membrane-spanning segment. The Cytoplasmic portion of the chain corresponds to 911–1742 (LNSFNSEELK…SAKHWTRVRT (832 aa)). A compositionally biased stretch (polar residues) spans 1129–1157 (YNSTDTDPYANDQRSGCGSFNRGDSLQDN). Disordered regions lie at residues 1129–1166 (YNST…GSEE), 1185–1224 (YRKS…NSMS), 1268–1288 (ISNV…ENET), 1577–1630 (APTP…ADAS), and 1635–1654 (LAMA…ATQK). Over residues 1191-1203 (RLSQSSGQSQRSL) the composition is skewed to low complexity. The segment covering 1204–1213 (LKSEEAEMRR) has biased composition (basic and acidic residues). Composition is skewed to polar residues over residues 1277 to 1286 (PSSQMGQPEN), 1604 to 1618 (PQST…QSAR), and 1640 to 1654 (KTEQ…ATQK). The III repeat unit spans residues 1723–2040 (PWFMSCMDTQ…QKHYYTAMKK (318 aa)). Residues 1743 to 1763 (AVLTVVDTPAFEWFVLVLIFA) traverse the membrane as a helical segment. The Extracellular segment spans residues 1764–1789 (SSITLCFEDINLDKNKTLKRVLYWIN). N-linked (GlcNAc...) asparagine glycans are attached at residues Asn1778 and Asn1789. A helical transmembrane segment spans residues 1790 to 1810 (FSFCLIFVVEMILKWLALGFS). Topologically, residues 1811–1813 (KYF) are cytoplasmic. Residues 1814–1834 (TSFWTILDFIIVFVSVFSLLI) form a helical membrane-spanning segment. At 1835 to 1839 (EENEN) the chain is on the extracellular side. A helical; Voltage-sensor transmembrane segment spans residues 1840 to 1861 (LKVLRSLRTLRALRPLRAISRW). At 1862-1880 (QGMRIVVNALMYAIPSIFN) the chain is on the cytoplasmic side. A helical membrane pass occupies residues 1881–1902 (VLLVCLVFWLIFSIMGVQFFGG). Topologically, residues 1903–1943 (KFFKCVNEMGELLPITEVNDKWDCIEQNYTWINSKITFDHV) are extracellular. Asn1930 carries an N-linked (GlcNAc...) asparagine glycan. Positions 1944-1965 (GMGYLALLQVATFEGWMEVMAD) form an intramembrane region, pore-forming. Topologically, residues 1966–1981 (AVDARGVDLQPQREAN) are extracellular. The chain crosses the membrane as a helical span at residues 1982-2002 (LYAYIYFVIFIVCGSFFTLNL). The Cytoplasmic portion of the chain corresponds to 2003–2069 (FIGVIIDNFN…MFYDLSNSRR (67 aa)). An IV repeat occupies 2050–2311 (IKRPINHFLA…NMYIAIILEN (262 aa)). Residues 2070 to 2090 (FEIAIFVLIFLNMLTMGIEHY) traverse the membrane as a helical segment. Over 2091–2095 (DQPHA) the chain is Extracellular. A helical transmembrane segment spans residues 2096-2116 (VFFILEVSNAFFTTVFGLEAI). The Cytoplasmic segment spans residues 2117-2132 (VKIVGLRYHYFTVPWN). Residues 2133 to 2153 (VFDFLLVLASIFGILMEDIMI) traverse the membrane as a helical segment. The Extracellular segment spans residues 2154-2162 (DLPISPTLL). The chain crosses the membrane as a helical; Voltage-sensor span at residues 2163–2184 (RVVRVFRIGRILRLIKAAKGIR). The Cytoplasmic segment spans residues 2185 to 2199 (KLLFALVVSLPALFN). Residues 2200 to 2220 (IGALLGLITFIYAILGMSLFG) traverse the membrane as a helical segment. Over 2221–2236 (NVKLQGALDDMVNFQT) the chain is Extracellular. Residues 2237-2259 (FGRSMQLLFRLMTSAGWNDVLES) constitute an intramembrane region (pore-forming). The Extracellular portion of the chain corresponds to 2260-2288 (LMIQPPDCDPFIHGHTNGNCGHPLLAITY). Residues 2289 to 2309 (FTSFIIISYMIVINMYIAIIL) traverse the membrane as a helical segment. The Cytoplasmic segment spans residues 2310–2844 (ENFNQAHQEE…QFESLPDRQR (535 aa)). The IQ domain occupies 2441–2470 (QEKAAKTIQTGWKEYLRRKREKERSNSGDS). Disordered stretches follow at residues 2457–2479 (RRKR…SPGG), 2584–2668 (SLTS…LSAQ), 2780–2802 (DSPK…GAPI), and 2818–2844 (NPEK…DRQR). Positions 2467–2479 (SGDSATQTSSPGG) are enriched in polar residues. Residues 2595–2632 (AMNNTTNTTSNSASTSGTASSTATAPATGCGPAATSAS) show a composition bias toward low complexity. Residues 2647–2658 (SRKRASSFIRKK) show a composition bias toward basic residues. The segment covering 2825 to 2836 (DQGNGQDETAQF) has biased composition (polar residues).

This sequence belongs to the sodium channel (TC 1.A.1.10) family. NaCP60E subfamily. In embryonic and larval stages, expression is limited to very few non-neuronal cells in either the CNS or PNS. In pupal and adult stages, expressed in cell bodies of the fly central nervous system, including optic lobes, central brain, subesophageal ganglion, thoracico-abdominal ganglion, major olfactory organs, the third antennal segment and the maxillary palps.

The protein resides in the cell membrane. Mediates the voltage-dependent sodium ion permeability of excitable membranes. Plays a role in processing of olfactory information during the olfactory avoidance response. In Drosophila melanogaster (Fruit fly), this protein is Sodium channel protein 60E (NaCP60E).